Here is a 107-residue protein sequence, read N- to C-terminus: Large ribosomal subunit protein bL21 (107 aa).

It belongs to the bacterial ribosomal protein bL21 family. In terms of assembly, part of the 50S ribosomal subunit. Contacts protein L20.

In terms of biological role, this protein binds to 23S rRNA in the presence of protein L20. This chain is Large ribosomal subunit protein bL21, found in Chlamydia muridarum (strain MoPn / Nigg).